The sequence spans 625 residues: Baeyer-Villiger monooxygenase ATR8 (625 aa).

FAD is bound by residues aspartate 112, 120-123 (TWYW), aspartate 132, and tyrosine 138. NADP(+) is bound at residue 130–132 (QCD). NADP(+) is bound by residues 266 to 272 (TGATAIQ), 289 to 290 (RT), and 405 to 406 (KR).

The protein belongs to the FAD-binding monooxygenase family. The cofactor is FAD.

The protein operates within mycotoxin biosynthesis. Baeyer-Villiger monooxygenase; part of the core atranone cluster (CAC) which products are predicted to catalyze most or all steps of mycotoxin atranone synthesis, starting from geranylgeranyl pyrophosphate (GGPP). The initial cyclization of GGPP to dolabellane is probably performed by the terpene cyclase ATR13. The Baeyer-Villiger oxidation near the end of the atranone synthesis, which converts atranones D and E to atranones F and G is predicted to be catalyzed by the monooxygenase ATR8. Of the CAC's other predicted gene products, the reducing PKS ATR6 might synthesize a polyketide chain. This polyketide is probably transferred onto the atranone backbone by the polyketide transferase ATR5. Other predicted CAC products include 4 oxygenases (ATR2, ATR3, ATR4, and ATR14), 3 short-chain reductases (ATR7, ATR9, and ATR10), and a methyltransferase (ATR12). These may all be involved in the various steps of atranone biosynthesis, although their specific roles must await experimental determination. This Stachybotrys chlorohalonatus (strain IBT 40285) protein is Baeyer-Villiger monooxygenase ATR8.